The chain runs to 205 residues: High frequency lysogenization protein HflD homolog (205 aa).

Belongs to the HflD family.

Its subcellular location is the cytoplasm. It localises to the cell inner membrane. In Aliivibrio fischeri (strain MJ11) (Vibrio fischeri), this protein is High frequency lysogenization protein HflD homolog.